A 1363-amino-acid chain; its full sequence is Kinesin-like protein kif7 (1363 aa).

Positions 15–347 (AVQVAVRVRP…LNYAKRARNI (333 aa)) constitute a Kinesin motor domain. 94 to 101 (GQTGSGKT) is a binding site for ATP. Coiled-coil stretches lie at residues 358–385 (EPDR…SETR) and 491–552 (EDWR…LLAQ). A compositionally biased stretch (polar residues) spans 603-622 (DSSSYSEQTQWDGTHGNTHC). The disordered stretch occupies residues 603 to 642 (DSSSYSEQTQWDGTHGNTHCESSRKLNRDEDGHMQTTRDK). Residues 623 to 640 (ESSRKLNRDEDGHMQTTR) show a composition bias toward basic and acidic residues. Coiled coils occupy residues 714 to 1068 (LLQA…AAIE) and 1116 to 1225 (DKVV…LREM). Residues 1314-1346 (IVQPGMNSTHWSGSTSLPVTRPRREPRRSSLNT) form a disordered region. Residues 1318-1331 (GMNSTHWSGSTSLP) show a composition bias toward polar residues.

Belongs to the TRAFAC class myosin-kinesin ATPase superfamily. Kinesin family. KIF27 subfamily. Binds microtubules. Interacts with gli1 and sufu.

The protein resides in the cytoplasm. The protein localises to the cytoskeleton. Its subcellular location is the cell projection. It is found in the cilium. In terms of biological role, acts downstream of smo as an intracellular repressor of hedgehog signaling pathway, mainly through the suppression of gli1 activity. This negative regulatory effect is enhanced in conjunction with the suppressor of fused (sufu) protein. Positively regulates gli2a activity by promoting its dissociation from sufu. Involved in the regulation of microtubular dynamics. The chain is Kinesin-like protein kif7 (kif7) from Danio rerio (Zebrafish).